The chain runs to 396 residues: N-acyl-phosphatidylethanolamine-hydrolyzing phospholipase D (396 aa).

N-acetylmethionine is present on Met1. Polar residues-rich tracts occupy residues 1 to 12 (MDENENSQSPAP) and 26 to 37 (NSVQNSGGSESS). A disordered region spans residues 1–41 (MDENENSQSPAPSHQYPKETLRKRQNSVQNSGGSESSRLSR). Zn(2+)-binding residues include His185 and His187. Tyr188 is a binding site for an N-acyl-1,2-diacyl-sn-glycero-3-phosphoethanolamine. Positions 189, 190, and 253 each coordinate Zn(2+). A deoxycholate-binding site is contributed by Lys256. Residue Asp284 coordinates Zn(2+). His321 is a binding site for an N-acyl-1,2-diacyl-sn-glycero-3-phosphoethanolamine. His343 is a binding site for Zn(2+). A deoxycholate-binding site is contributed by Ala348.

Belongs to the NAPE-PLD family. Homodimer. Bile acids promote the assembly of inactive monomers into an active dimer and enable catalysis. Zn(2+) is required as a cofactor. Widely expressed. Highest expression in brain, kidney and testis (at protein level). Expressed in adipose tissue (at protein level).

The protein resides in the golgi apparatus membrane. It is found in the early endosome membrane. Its subcellular location is the nucleus envelope. The protein localises to the nucleus. It localises to the nucleoplasm. The enzyme catalyses an N-acyl-1,2-diacyl-sn-glycero-3-phosphoethanolamine + H2O = an N-acylethanolamine + a 1,2-diacyl-sn-glycero-3-phosphate + H(+). It catalyses the reaction N-butanoyl-1-hexadecanoyl-2-(9Z,12Z-octadecadienoyl)-sn-glycero-3-phosphoethanolamine + H2O = N-butanoyl ethanolamine + 1-hexadecanoyl-2-(9Z,12Z-octadecadienoyl)-sn-glycero-3-phosphate + H(+). The catalysed reaction is N-hexanoyl-1-hexadecanoyl-2-(9Z,12Z-octadecadienoyl)-sn-glycero-3-phosphoethanolamine + H2O = N-hexanoyl ethanolamine + 1-hexadecanoyl-2-(9Z,12Z-octadecadienoyl)-sn-glycero-3-phosphate + H(+). It carries out the reaction N-octanoyl-1-hexadecanoyl-2-(9Z,12Z-octadecadienoyl)-sn-glycero-3-phosphoethanolamine + H2O = N-octanoyl ethanolamine + 1-hexadecanoyl-2-(9Z,12Z-octadecadienoyl)-sn-glycero-3-phosphate + H(+). The enzyme catalyses N-decanoyl-1-hexadecanoyl-2-(9Z,12Z-octadecadienoyl)-sn-glycero-3-phosphoethanolamine + H2O = N-decanoyl ethanolamine + 1-hexadecanoyl-2-(9Z,12Z-octadecadienoyl)-sn-glycero-3-phosphate + H(+). It catalyses the reaction N-dodecanoyl-1,2-di-(9Z-octadecenoyl)-sn-glycero-3-phosphoethanolamine + H2O = N-dodecanoylethanolamine + 1,2-di-(9Z-octadecenoyl)-sn-glycero-3-phosphate + H(+). The catalysed reaction is N-tetradecanoyl-1,2-di-(9Z-octadecenoyl)-sn-glycero-3-phosphoethanolamine + H2O = N-tetradecanoylethanolamine + 1,2-di-(9Z-octadecenoyl)-sn-glycero-3-phosphate + H(+). It carries out the reaction N-hexadecanoyl-1,2-di-(9Z-octadecenoyl)-sn-glycero-3-phosphoethanolamine + H2O = N-hexadecanoylethanolamine + 1,2-di-(9Z-octadecenoyl)-sn-glycero-3-phosphate + H(+). The enzyme catalyses N,1-dihexadecanoyl-2-(9Z,12Z-octadecadienoyl)-sn-glycero-3-phosphoethanolamine + H2O = 1-hexadecanoyl-2-(9Z,12Z-octadecadienoyl)-sn-glycero-3-phosphate + N-hexadecanoylethanolamine + H(+). It catalyses the reaction N-octadecanoyl-1,2-di-(9Z-octadecenoyl)-sn-glycero-3-phosphoethanolamine + H2O = N-octadecanoyl ethanolamine + 1,2-di-(9Z-octadecenoyl)-sn-glycero-3-phosphate + H(+). The catalysed reaction is N,1,2-tri-(9Z-octadecenoyl)-sn-glycero-3-phosphoethanolamine + H2O = N-(9Z-octadecenoyl) ethanolamine + 1,2-di-(9Z-octadecenoyl)-sn-glycero-3-phosphate + H(+). It carries out the reaction N-(5Z,8Z,11Z,14Z-eicosatetraenoyl)-1,2-diacyl-sn-glycero-3-phosphoethanolamine + H2O = N-(5Z,8Z,11Z,14Z-eicosatetraenoyl)-ethanolamine + a 1,2-diacyl-sn-glycero-3-phosphate + H(+). The enzyme catalyses N-(5Z,8Z,11Z,14Z-eicosatetraenoyl)-1,2-di-(9Z-octadecenoyl)-sn-glycero-3-phosphoethanolamine + H2O = N-(5Z,8Z,11Z,14Z-eicosatetraenoyl)-ethanolamine + 1,2-di-(9Z-octadecenoyl)-sn-glycero-3-phosphate + H(+). It catalyses the reaction 1-O-(1Z-octadecenoyl)-2-(9Z-octadecenoyl)-sn-glycero-3-phospho-N-hexadecanoyl-ethanolamine + H2O = 1-O-(1Z-octadecenoyl)-2-(9Z-octadecenoyl)-sn-glycero-3-phosphate + N-hexadecanoylethanolamine + H(+). The catalysed reaction is N,1-diacyl-sn-glycero-3-phosphoethanolamine + H2O = an N-acylethanolamine + a 1-acyl-sn-glycero-3-phosphate + H(+). It carries out the reaction N,1-dihexadecanoyl-sn-glycero-3-phosphoethanolamine + H2O = N-hexadecanoylethanolamine + 1-hexadecanoyl-sn-glycero-3-phosphate + H(+). The enzyme catalyses N-(5Z,8Z,11Z,14Z-eicosatetraenoyl)-1-(9Z-octadecenoyl)-sn-glycero-3-phosphoethanolamine + H2O = N-(5Z,8Z,11Z,14Z-eicosatetraenoyl)-ethanolamine + 1-(9Z-octadecenoyl)-sn-glycero-3-phosphate + H(+). Its activity is regulated as follows. Activated by divalent cations. Activated by bile acids. Activated by membrane phospholipids such as phosphatidylethanolamines. Inhibited by cardiolipins. D-type phospholipase that hydrolyzes N-acyl-phosphatidylethanolamines (NAPEs) to produce bioactive N-acylethanolamines/fatty acid ethanolamides (NAEs/FAEs) and phosphatidic acid. Cleaves the terminal phosphodiester bond of diacyl- and alkenylacyl-NAPEs, primarily playing a role in the generation of long-chain saturated and monounsaturated NAEs in the brain. May control NAPE homeostasis in dopaminergic neuron membranes and regulate neuron survival, partly through RAC1 activation. As a regulator of lipid metabolism in the adipose tissue, mediates the crosstalk between adipocytes, gut microbiota and immune cells to control body temperature and weight. In particular, regulates energy homeostasis by promoting cold-induced brown or beige adipocyte differentiation program to generate heat from fatty acids and glucose. Has limited D-type phospholipase activity toward N-acyl lyso-NAPEs. This chain is N-acyl-phosphatidylethanolamine-hydrolyzing phospholipase D (Napepld), found in Rattus norvegicus (Rat).